The chain runs to 313 residues: MGWVPDEWSIDHDTLIDAGGYVQKLKLYPYFDAAHYVLTCLSVRHDLGPDAISFSRKHPFSCWLSCMLMSFAGSFLSCFLLGEPIISPLKQHADILLGSIVWYLVFYSPFDVVFRLATWFPVKLGLSVLKEVQRTHKIAAGVKHAVRIYPESYLVQILVGVAKGAGSGVVKIVEQLARGTWHPTNHEILRPSFTTKACVIASIVFTLERHSMYVTAPHDLVYLCVVGFFIYFKLASLCLSVHDVLMPIENVLCAVFMGGIIDAFAKAVDATKKAIHSNRVLSEEEILSKEREKVLKKKKLLAQMSNGTDKKNN.

Topologically, residues 1–28 are lumenal; that stretch reads MGWVPDEWSIDHDTLIDAGGYVQKLKLY. Residues 29–48 traverse the membrane as a helical segment; it reads PYFDAAHYVLTCLSVRHDLG. Residues 49–57 are Cytoplasmic-facing; the sequence is PDAISFSRK. The chain crosses the membrane as a discontinuously helical span at residues 58–82; sequence HPFSCWLSCMLMSFAGSFLSCFLLG. The Lumenal segment spans residues 83 to 90; the sequence is EPIISPLK. The chain crosses the membrane as a helical span at residues 91–108; sequence QHADILLGSIVWYLVFYS. At 109–118 the chain is on the cytoplasmic side; that stretch reads PFDVVFRLAT. The helical transmembrane segment at 119-149 threads the bilayer; it reads WFPVKLGLSVLKEVQRTHKIAAGVKHAVRIY. A 1,2-diacyl-sn-glycero-3-phospho-(1D-myo-inositol-4,5-bisphosphate) contacts are provided by lysine 130 and arginine 134. The Lumenal segment spans residues 150–151; the sequence is PE. Residues 152 to 178 traverse the membrane as a discontinuously helical segment; it reads SYLVQILVGVAKGAGSGVVKIVEQLAR. Glycine 168 serves as a coordination point for a 1,2-diacyl-sn-glycero-3-phospho-(1D-myo-inositol-4,5-bisphosphate). Over 179-192 the chain is Cytoplasmic; sequence GTWHPTNHEILRPS. Residues 193–210 form a helical membrane-spanning segment; it reads FTTKACVIASIVFTLERH. Topologically, residues 211-216 are lumenal; that stretch reads SMYVTA. The chain crosses the membrane as a helical span at residues 217 to 239; that stretch reads PHDLVYLCVVGFFIYFKLASLCL. Residues 240 to 313 are Cytoplasmic-facing; it reads SVHDVLMPIE…MSNGTDKKNN (74 aa).

Belongs to the TMEM38 family. In terms of assembly, homotrimer; trimerization probably requires binding to phosphatidylinositol 4,5-bisphosphate (PIP2).

The protein resides in the endoplasmic reticulum membrane. Functionally, potassium channel that mediates transmembrane potassium transport. Might be required for maintenance of rapid intracellular calcium release. May act as a potassium counter-ion channel that functions in synchronization with calcium release from intracellular stores. Binds phosphatidylinositol 4,5-bisphosphate (PIP2). This is Trimeric intracellular cation channel type 1B.2 from Caenorhabditis elegans.